A 418-amino-acid polypeptide reads, in one-letter code: eIF5-mimic protein 2-B (418 aa).

The segment covering 1-15 (MSYQKQQKPTLTGQR) has biased composition (polar residues). Residues 1-29 (MSYQKQQKPTLTGQRFKTRKRDEKERFDP) are disordered. In terms of domain architecture, W2 spans 247 to 414 (NQQSLGARKE…KNAEEESESE (168 aa)).

Belongs to the BZW family.

Functionally, translation initiation regulator which may repress repeat-associated non-AUG (RAN) initiated translation probably by acting as a competitive inhibitor of eukaryotic translation initiation factor 5 (EIF5) function. Enhances histone H4 gene transcription but does not seem to bind DNA directly. The polypeptide is eIF5-mimic protein 2-B (bzw1b) (Danio rerio (Zebrafish)).